Reading from the N-terminus, the 150-residue chain is Transcription antitermination protein NusB (150 aa).

This sequence belongs to the NusB family.

Functionally, involved in transcription antitermination. Required for transcription of ribosomal RNA (rRNA) genes. Binds specifically to the boxA antiterminator sequence of the ribosomal RNA (rrn) operons. In Alcanivorax borkumensis (strain ATCC 700651 / DSM 11573 / NCIMB 13689 / SK2), this protein is Transcription antitermination protein NusB.